The following is a 334-amino-acid chain: Transposase for insertion sequence element IS1328 (334 aa).

Belongs to the transposase IS1111A/IS1328/IS1533 family.

In terms of biological role, required for the transposition of the insertion element. The protein is Transposase for insertion sequence element IS1328 of Yersinia enterocolitica.